Reading from the N-terminus, the 253-residue chain is Small ribosomal subunit protein uS3 (253 aa).

Positions 39–107 (VRRALKKRLY…EVHLNIVEIR (69 aa)) constitute a KH type-2 domain. Residues 215–253 (LDKRLAGESGPAGEGGGRERGDRPDRGPRRERRGEPSNA) are disordered. The segment covering 230–253 (GGRERGDRPDRGPRRERRGEPSNA) has biased composition (basic and acidic residues).

Belongs to the universal ribosomal protein uS3 family. As to quaternary structure, part of the 30S ribosomal subunit. Forms a tight complex with proteins S10 and S14.

Binds the lower part of the 30S subunit head. Binds mRNA in the 70S ribosome, positioning it for translation. The polypeptide is Small ribosomal subunit protein uS3 (Phenylobacterium zucineum (strain HLK1)).